The sequence spans 113 residues: Large ribosomal subunit protein uL18 (113 aa).

Belongs to the universal ribosomal protein uL18 family. In terms of assembly, part of the 50S ribosomal subunit; part of the 5S rRNA/L5/L18/L25 subcomplex. Contacts the 5S and 23S rRNAs.

This is one of the proteins that bind and probably mediate the attachment of the 5S RNA into the large ribosomal subunit, where it forms part of the central protuberance. The sequence is that of Large ribosomal subunit protein uL18 from Phocaeicola vulgatus (strain ATCC 8482 / DSM 1447 / JCM 5826 / CCUG 4940 / NBRC 14291 / NCTC 11154) (Bacteroides vulgatus).